The following is a 100-amino-acid chain: Integration host factor subunit alpha (100 aa).

The protein belongs to the bacterial histone-like protein family. As to quaternary structure, heterodimer of an alpha and a beta chain.

This protein is one of the two subunits of integration host factor, a specific DNA-binding protein that functions in genetic recombination as well as in transcriptional and translational control. The polypeptide is Integration host factor subunit alpha (Ruegeria sp. (strain TM1040) (Silicibacter sp.)).